The sequence spans 130 residues: Fluoride-specific ion channel FluC (130 aa).

A run of 4 helical transmembrane segments spans residues 10–30 (FAVALGAIGGSLSRYYLSLWF), 41–61 (GTLIINLSGCVVMGWFMTVAM), 72–89 (LLFGVGFLGSYTTFSTYE), and 105–125 (LVYWLGSCLFGALAMELGILL). Residues G80 and T83 each contribute to the Na(+) site.

Belongs to the fluoride channel Fluc/FEX (TC 1.A.43) family.

It localises to the cell inner membrane. It catalyses the reaction fluoride(in) = fluoride(out). Its activity is regulated as follows. Na(+) is not transported, but it plays an essential structural role and its presence is essential for fluoride channel function. Functionally, fluoride-specific ion channel. Important for reducing fluoride concentration in the cell, thus reducing its toxicity. The chain is Fluoride-specific ion channel FluC from Synechococcus sp. (strain JA-2-3B'a(2-13)) (Cyanobacteria bacterium Yellowstone B-Prime).